We begin with the raw amino-acid sequence, 500 residues long: Phenylalanine--tRNA ligase alpha subunit (500 aa).

Residues Thr343, 382 to 384 (QID), and Phe423 contribute to the L-phenylalanine site. Position 425 (Glu425) interacts with Mg(2+). Phe448 contacts L-phenylalanine.

It belongs to the class-II aminoacyl-tRNA synthetase family. Phe-tRNA synthetase alpha subunit type 2 subfamily. In terms of assembly, tetramer of two alpha and two beta subunits. The cofactor is Mg(2+).

The protein resides in the cytoplasm. It catalyses the reaction tRNA(Phe) + L-phenylalanine + ATP = L-phenylalanyl-tRNA(Phe) + AMP + diphosphate + H(+). The protein is Phenylalanine--tRNA ligase alpha subunit of Pyrococcus abyssi (strain GE5 / Orsay).